Here is an 87-residue protein sequence, read N- to C-terminus: HssA/B-like protein 28 (87 aa).

The protein belongs to the hssA/B family.

This chain is HssA/B-like protein 28 (hssl28), found in Dictyostelium discoideum (Social amoeba).